The primary structure comprises 143 residues: Nuclear transcription factor Y subunit B-4 (143 aa).

The segment at 1–23 (MSEGFDGTENGGGGGGGGVGKEQ) is disordered. Over residues 9-20 (ENGGGGGGGGVG) the composition is skewed to gly residues. A DNA-binding region spans residues 27–33 (LPIANIG). A subunit association domain (SAD) region spans residues 54 to 65 (VQECVSEFISFI). The segment covering 117-130 (KGSRASELPVKKDV) has biased composition (basic and acidic residues). Residues 117-143 (KGSRASELPVKKDVVLNGDPGSSFEGM) are disordered.

This sequence belongs to the NFYB/HAP3 subunit family. Heterotrimeric transcription factor composed of three components, NF-YA, NF-YB and NF-YC. NF-YB and NF-YC must interact and dimerize for NF-YA association and DNA binding. In terms of tissue distribution, ubiquitous.

It is found in the nucleus. Component of the NF-Y/HAP transcription factor complex. The NF-Y complex stimulates the transcription of various genes by recognizing and binding to a CCAAT motif in promoters. May regulate the expression of photosynthetic genes, and may be involved in chloroplast and amyloplast development. This is Nuclear transcription factor Y subunit B-4 (NFYB4) from Oryza sativa subsp. japonica (Rice).